The sequence spans 526 residues: Arginine/ornithine antiporter ArcD1 (526 aa).

14 helical membrane-spanning segments follow: residues 8–28, 41–61, 88–108, 128–148, 160–180, 220–240, 255–275, 297–317, 354–374, 378–398, 407–427, 428–448, 466–486, and 495–515; these read GIGL…GGVF, GGVV…VLSL, FISG…FAVL, LTIL…LLVM, IVLV…IVTF, VKGS…AAMM, IFGL…PFGF, VGGW…LGAW, LLLT…VADA, FVYL…LYLF, TSNI…LYYS, GWQF…LYAL, FILT…WLGL, and NTLL…YFVV.

Belongs to the amino acid-polyamine-organocation (APC) superfamily. Basic amino acid/polyamine antiporter (APA) (TC 2.A.3.2) family.

The protein resides in the cell membrane. The enzyme catalyses L-ornithine(in) + L-arginine(out) = L-ornithine(out) + L-arginine(in). Catalyzes electroneutral exchange between L-arginine and L-ornithine. Can also efficiently translocate L-histidine and L-lysine. ArcD1 is the main L-arginine/L-ornithine exchanger in the arginine deiminase (ADI) pathway. The chain is Arginine/ornithine antiporter ArcD1 from Lactococcus lactis subsp. cremoris (strain MG1363).